Consider the following 90-residue polypeptide: Probable Fe(2+)-trafficking protein (90 aa).

This sequence belongs to the Fe(2+)-trafficking protein family.

Could be a mediator in iron transactions between iron acquisition and iron-requiring processes, such as synthesis and/or repair of Fe-S clusters in biosynthetic enzymes. In Halorhodospira halophila (strain DSM 244 / SL1) (Ectothiorhodospira halophila (strain DSM 244 / SL1)), this protein is Probable Fe(2+)-trafficking protein.